Here is a 165-residue protein sequence, read N- to C-terminus: Pyruvoyl-dependent arginine decarboxylase (165 aa).

S53 is subject to Pyruvic acid (Ser).

It belongs to the PdaD family. Trimer of an alpha-beta dimer. Pyruvate serves as cofactor.

It catalyses the reaction L-arginine + H(+) = agmatine + CO2. This is Pyruvoyl-dependent arginine decarboxylase (pdaD) from Methanocaldococcus jannaschii (strain ATCC 43067 / DSM 2661 / JAL-1 / JCM 10045 / NBRC 100440) (Methanococcus jannaschii).